A 383-amino-acid polypeptide reads, in one-letter code: Acetylornithine deacetylase (383 aa).

A Zn(2+)-binding site is contributed by His-80. Asp-82 is a catalytic residue. Zn(2+) is bound at residue Asp-112. The active site involves Glu-144. Zn(2+)-binding residues include Glu-145, Glu-169, and His-355.

This sequence belongs to the peptidase M20A family. ArgE subfamily. Homodimer. The cofactor is Zn(2+). Co(2+) serves as cofactor. Glutathione is required as a cofactor.

Its subcellular location is the cytoplasm. The enzyme catalyses N(2)-acetyl-L-ornithine + H2O = L-ornithine + acetate. It functions in the pathway amino-acid biosynthesis; L-arginine biosynthesis; L-ornithine from N(2)-acetyl-L-ornithine (linear): step 1/1. Catalyzes the hydrolysis of the amide bond of N(2)-acetylated L-amino acids. Cleaves the acetyl group from N-acetyl-L-ornithine to form L-ornithine, an intermediate in L-arginine biosynthesis pathway, and a branchpoint in the synthesis of polyamines. The polypeptide is Acetylornithine deacetylase (Escherichia coli O7:K1 (strain IAI39 / ExPEC)).